The primary structure comprises 262 residues: ATP synthase subunit a (262 aa).

Helical transmembrane passes span isoleucine 32 to valine 52, leucine 98 to isoleucine 118, phenylalanine 127 to tryptophan 147, phenylalanine 153 to isoleucine 173, leucine 189 to aspartate 209, and leucine 219 to valine 239.

This sequence belongs to the ATPase A chain family. As to quaternary structure, F-type ATPases have 2 components, CF(1) - the catalytic core - and CF(0) - the membrane proton channel. CF(1) has five subunits: alpha(3), beta(3), gamma(1), delta(1), epsilon(1). CF(0) has four main subunits: a, b, b' and c.

It localises to the cell inner membrane. Functionally, key component of the proton channel; it plays a direct role in the translocation of protons across the membrane. This is ATP synthase subunit a from Erythrobacter litoralis (strain HTCC2594).